We begin with the raw amino-acid sequence, 324 residues long: Beta-ketoacyl-[acyl-carrier-protein] synthase III (324 aa).

Active-site residues include C114 and H246. An ACP-binding region spans residues 247–251; that stretch reads QANLR. N276 is a catalytic residue.

Belongs to the thiolase-like superfamily. FabH family. In terms of assembly, homodimer.

It is found in the cytoplasm. The enzyme catalyses malonyl-[ACP] + acetyl-CoA + H(+) = 3-oxobutanoyl-[ACP] + CO2 + CoA. Its pathway is lipid metabolism; fatty acid biosynthesis. Functionally, catalyzes the condensation reaction of fatty acid synthesis by the addition to an acyl acceptor of two carbons from malonyl-ACP. Catalyzes the first condensation reaction which initiates fatty acid synthesis and may therefore play a role in governing the total rate of fatty acid production. Possesses both acetoacetyl-ACP synthase and acetyl transacylase activities. Its substrate specificity determines the biosynthesis of branched-chain and/or straight-chain of fatty acids. The polypeptide is Beta-ketoacyl-[acyl-carrier-protein] synthase III (Campylobacter jejuni subsp. doylei (strain ATCC BAA-1458 / RM4099 / 269.97)).